The sequence spans 234 residues: Phosphoribosylaminoimidazole-succinocarboxamide synthase (234 aa).

Belongs to the SAICAR synthetase family.

The catalysed reaction is 5-amino-1-(5-phospho-D-ribosyl)imidazole-4-carboxylate + L-aspartate + ATP = (2S)-2-[5-amino-1-(5-phospho-beta-D-ribosyl)imidazole-4-carboxamido]succinate + ADP + phosphate + 2 H(+). It participates in purine metabolism; IMP biosynthesis via de novo pathway; 5-amino-1-(5-phospho-D-ribosyl)imidazole-4-carboxamide from 5-amino-1-(5-phospho-D-ribosyl)imidazole-4-carboxylate: step 1/2. The chain is Phosphoribosylaminoimidazole-succinocarboxamide synthase from Streptococcus pyogenes serotype M1.